The sequence spans 358 residues: Extracellular phospholipase C (358 aa).

It localises to the secreted. The sequence is that of Extracellular phospholipase C (plcA) from Dickeya chrysanthemi (Pectobacterium chrysanthemi).